A 180-amino-acid polypeptide reads, in one-letter code: ADP-ribosylation factor 5 (180 aa).

Residue Gly-2 is the site of N-myristoyl glycine attachment. GTP-binding positions include 24 to 31 (GLDAAGKT), 67 to 71 (DVGGQ), and 126 to 129 (NKQD).

The protein belongs to the small GTPase superfamily. Arf family.

Its subcellular location is the golgi apparatus. Functionally, GTP-binding protein involved in protein trafficking; may modulate vesicle budding and uncoating within the Golgi apparatus. The protein is ADP-ribosylation factor 5 (ARF5) of Gallus gallus (Chicken).